The sequence spans 601 residues: Elongation factor 4 (601 aa).

Residues 5–187 (IRKKNFCIIA…AICKYVPSPK (183 aa)) enclose the tr-type G domain. Residues 17-22 (DHGKST) and 134-137 (NKID) each bind GTP.

The protein belongs to the TRAFAC class translation factor GTPase superfamily. Classic translation factor GTPase family. LepA subfamily.

The protein resides in the cell inner membrane. The catalysed reaction is GTP + H2O = GDP + phosphate + H(+). In terms of biological role, required for accurate and efficient protein synthesis under certain stress conditions. May act as a fidelity factor of the translation reaction, by catalyzing a one-codon backward translocation of tRNAs on improperly translocated ribosomes. Back-translocation proceeds from a post-translocation (POST) complex to a pre-translocation (PRE) complex, thus giving elongation factor G a second chance to translocate the tRNAs correctly. Binds to ribosomes in a GTP-dependent manner. This is Elongation factor 4 from Borreliella afzelii (strain PKo) (Borrelia afzelii).